A 119-amino-acid polypeptide reads, in one-letter code: MARVKRGVQARRRHKKILSLAKGYYNARRKVFRVAKQAVIKAQQYAYIGRKQKKRNFRSLWIVRINAAARMNGLSYSRFMNGILKCGITLDRKMLADIAVHDPAGFTALAEKAKTMLAA.

Belongs to the bacterial ribosomal protein bL20 family.

Binds directly to 23S ribosomal RNA and is necessary for the in vitro assembly process of the 50S ribosomal subunit. It is not involved in the protein synthesizing functions of that subunit. This chain is Large ribosomal subunit protein bL20, found in Xylella fastidiosa (strain M23).